The sequence spans 627 residues: Zinc finger protein 256 (627 aa).

In terms of domain architecture, KRAB spans 14 to 96 (VTFEDVAVYF…QKTNPCEICG (83 aa)). The segment at 55-76 (GSGAGDEEAPYQQSTSPQRVSQ) is disordered. The segment covering 65–75 (YQQSTSPQRVS) has biased composition (polar residues). 15 consecutive C2H2-type zinc fingers follow at residues 90–112 (NPCE…QGTH), 239–261 (YMCS…LRVH), 267–289 (YTCG…RRIH), 295–317 (HQCD…QRVH), 323–345 (YKCS…QRIH), 351–373 (YECS…QRVH), 379–401 (YMCS…RRLH), 407–429 (YECS…QRVH), 435–457 (HECH…ERVH), 463–485 (YECS…WKVH), 491–513 (YECG…QRVH), 519–541 (YECN…RRSH), 547–569 (YECS…RRVH), 575–597 (YECS…QRIH), and 603–625 (YECS…QNVH).

The protein belongs to the krueppel C2H2-type zinc-finger protein family. Interacts with TRIM28.

It is found in the nucleus. In terms of biological role, transcriptional repressor that plays a role in cell proliferation. Requires TRIM28 for its activity. This is Zinc finger protein 256 (ZNF256) from Homo sapiens (Human).